We begin with the raw amino-acid sequence, 82 residues long: DNA-directed RNA polymerase subunit omega (82 aa).

Belongs to the RNA polymerase subunit omega family. In terms of assembly, the RNAP catalytic core consists of 2 alpha, 1 beta, 1 beta' and 1 omega subunit. When a sigma factor is associated with the core the holoenzyme is formed, which can initiate transcription.

The catalysed reaction is RNA(n) + a ribonucleoside 5'-triphosphate = RNA(n+1) + diphosphate. In terms of biological role, promotes RNA polymerase assembly. Latches the N- and C-terminal regions of the beta' subunit thereby facilitating its interaction with the beta and alpha subunits. This Lachnoclostridium phytofermentans (strain ATCC 700394 / DSM 18823 / ISDg) (Clostridium phytofermentans) protein is DNA-directed RNA polymerase subunit omega.